A 702-amino-acid polypeptide reads, in one-letter code: Mesothelin-like protein (702 aa).

Positions 1–35 (MAAAVTIPGPRIGALQSSGLTLLLSLAAHCSGPQA) are cleaved as a signal peptide. The Extracellular segment spans residues 36–638 (KVLSPGGLDA…AQASTSGSLW (603 aa)). Residues N122, N307, and N424 are each glycosylated (N-linked (GlcNAc...) asparagine). Residues 588 to 611 (QLGLDASPTSPTGPAHGTRGPPST) are disordered. Residues 639–668 (APLGYLPLAMALPCSLLCLLHWGTCILVSV) form a helical membrane-spanning segment. The Cytoplasmic segment spans residues 669–702 (DSVASGWLGSQGSGAGKTEVLDSAGRPLGLTGQL).

It belongs to the mesothelin family.

It is found in the membrane. May play a role in cellular adhesion. The chain is Mesothelin-like protein (MSLNL) from Homo sapiens (Human).